The chain runs to 1515 residues: Metal resistance protein YCF1 (1515 aa).

Over 1-32 (MAGNLVSWACKLCRSPEGFGPISFYGDFTQCF) the chain is Vacuolar. Residues 33–53 (IDGVILNLSAIFMITFGIRDL) traverse the membrane as a helical segment. Residues 54–73 (VNLCKKKHSGIKYRRNWIIV) lie on the Cytoplasmic side of the membrane. Residues 74–94 (SRMALVLLEIAFVSLASLNIS) traverse the membrane as a helical segment. Over 95-99 (KEEAE) the chain is Vacuolar. The chain crosses the membrane as a helical span at residues 100-120 (NFTIVSQYASTMLSLFVALAL). Residues 121-130 (HWIEYDRSVV) lie on the Cytoplasmic side of the membrane. Residues 131–151 (ANTVLLFYWLFETFGNFAKLI) form a helical membrane-spanning segment. Residues 152–169 (NILIRHTYEGIWYSGQTG) are Vacuolar-facing. A helical transmembrane segment spans residues 170 to 190 (FILTLFQVITCASILLLEALP). Over 191–278 (KKPLMPHQHI…QKSNPSLSWA (88 aa)) the chain is Cytoplasmic. Residue Ser251 is modified to Phosphoserine. Residues 279 to 299 (ICRTFGSKMLLAAFFKAIHDV) form a helical membrane-spanning segment. One can recognise an ABC transmembrane type-1 1 domain in the interval 287-590 (MLLAAFFKAI…IPMVLNSFIE (304 aa)). Topologically, residues 300–345 (LAFTQPQLLRILIKFVTDYNSERQDDHSSLQGFENNHPQKLPIVRG) are vacuolar. Residues 346–366 (FLIAFAMFLVGFTQTSVLHQY) form a helical membrane-spanning segment. Residues 367–422 (FLNVFNTGMYIKSALTALIYQKSLVLSNEASGLSSTGDIVNLMSVDVQKLQDLTQW) lie on the Cytoplasmic side of the membrane. Residues 423–443 (LNLIWSGPFQIIICLYSLYKL) form a helical membrane-spanning segment. At 444–446 (LGN) the chain is on the vacuolar side. Residues 447 to 467 (SMWVGVIILVIMMPLNSFLMR) traverse the membrane as a helical segment. The Cytoplasmic portion of the chain corresponds to 468 to 530 (IQKKLQKSQM…NLTKLGCYMA (63 aa)). Residues 531-551 (VTSFQFNIVPFLVSCCTFAVF) form a helical membrane-spanning segment. Residues 552–572 (VYTEDRALTTDLVFPALTLFN) lie on the Vacuolar side of the membrane. The helical transmembrane segment at 573-593 (LLSFPLMIIPMVLNSFIEASV) threads the bilayer. Residues 594-943 (SIGRLFTFFT…VKWNIYLEYA (350 aa)) are Cytoplasmic-facing. The 228-residue stretch at 626–853 (INIGDDATFL…ADSPLWKLLN (228 aa)) folds into the ABC transporter 1 domain. 663–670 (GKVGSGKT) contributes to the ATP binding site. Phosphoserine is present on residues Ser873, Ser903, and Ser908. Phosphothreonine is present on Thr911. A Phosphoserine modification is found at Ser914. Residues 944–964 (KACNPKSVCVFILFIVISMFL) form a helical membrane-spanning segment. One can recognise an ABC transmembrane type-1 2 domain in the interval 951–1235 (VCVFILFIVI…IVRMTVEVET (285 aa)). At 965 to 1001 (SVMGNVWLKHWSEVNSRYGSNPNAARYLAIYFALGIG) the chain is on the vacuolar side. The chain crosses the membrane as a helical span at residues 1002–1023 (SALATLIQTIVLWVFCTIHASK). Topologically, residues 1024–1066 (YLHNLMTNSVLRAPMTFFETTPIGRILNRFSNDIYKVDALLGR) are cytoplasmic. The chain crosses the membrane as a helical span at residues 1067 to 1087 (TFSQFFVNAVKVTFTITVICA). Residue Thr1088 is a topological domain, vacuolar. The helical transmembrane segment at 1089–1109 (TWQFIFIIIPLSVFYIYYQQY) threads the bilayer. At 1110 to 1180 (YLRTSRELRR…NANRWLAYRL (71 aa)) the chain is on the cytoplasmic side. A helical transmembrane segment spans residues 1181–1201 (ELIGSIIILGAATLSVFRLKQ). The Vacuolar portion of the chain corresponds to 1202-1205 (GTLT). Residues 1206–1226 (AGMVGLSLSYALQITQTLNWI) traverse the membrane as a helical segment. At 1227–1515 (VRMTVEVETN…CMEAGLVNEN (289 aa)) the chain is on the cytoplasmic side. The ABC transporter 2 domain maps to 1272 to 1507 (IKFNNYSTRY…NKSLFYSLCM (236 aa)). ATP is bound at residue 1306–1313 (GRTGAGKS).

Belongs to the ABC transporter superfamily. ABCC family. Conjugate transporter (TC 3.A.1.208) subfamily.

It is found in the vacuole membrane. The catalysed reaction is Cd(2+)(in) + ATP + H2O = Cd(2+)(out) + ADP + phosphate + H(+). It catalyses the reaction an S-substituted glutathione(in) + ATP + H2O = an S-substituted glutathione(out) + ADP + phosphate + H(+). In terms of biological role, cooperates for the ATP-dependent vacuolar transport of bilirubin and glutathione conjugates. This is Metal resistance protein YCF1 (YCF1) from Saccharomyces cerevisiae (strain ATCC 204508 / S288c) (Baker's yeast).